The following is a 634-amino-acid chain: Probable potassium transport system protein Kup 2 (634 aa).

12 consecutive transmembrane segments (helical) span residues 20 to 40 (FWTL…TSPL), 64 to 84 (VLSL…VLLI), 110 to 130 (FAAI…DAII), 148 to 168 (PGFD…LFLV), 174 to 194 (AAVA…MAVA), 224 to 244 (AGLL…ALYA), 258 to 278 (WLVL…AMLL), 290 to 310 (LLFP…ATII), 348 to 368 (IYIP…VFAF), 377 to 397 (AYGI…FFVM), 405 to 425 (AAVA…FLMA), and 430 to 450 (IVDG…VMVT).

The protein belongs to the HAK/KUP transporter (TC 2.A.72) family.

The protein localises to the cell inner membrane. The catalysed reaction is K(+)(in) + H(+)(in) = K(+)(out) + H(+)(out). Its function is as follows. Transport of potassium into the cell. Likely operates as a K(+):H(+) symporter. In Rhodopseudomonas palustris (strain ATCC BAA-98 / CGA009), this protein is Probable potassium transport system protein Kup 2.